The following is a 387-amino-acid chain: Aminodeoxyfutalosine deaminase (387 aa).

A compositionally biased stretch (basic and acidic residues) spans 1–10 (MRPAYDDPRT). A disordered region spans residues 1–37 (MRPAYDDPRTTDQPITRARPPPRAARGRRLGEEPLTE). Residues His-61 and His-63 each coordinate Zn(2+). Substrate contacts are provided by Arg-116, Asp-183, and Gly-217. Residue His-244 coordinates Zn(2+). Glu-247 functions as the Proton donor in the catalytic mechanism. Asp-325 is a Zn(2+) binding site.

This sequence belongs to the metallo-dependent hydrolases superfamily. Adenosine and AMP deaminases family. Zn(2+) is required as a cofactor.

It carries out the reaction 6-amino-6-deoxyfutalosine + H2O + H(+) = futalosine + NH4(+). Its pathway is quinol/quinone metabolism; menaquinone biosynthesis. Catalyzes the deamination of aminodeoxyfutalosine (AFL) into futalosine (FL), a step in the biosynthesis of menaquinone (MK, vitamin K2). This is Aminodeoxyfutalosine deaminase from Streptomyces coelicolor (strain ATCC BAA-471 / A3(2) / M145).